The following is a 254-amino-acid chain: Leucyl/phenylalanyl-tRNA--protein transferase (254 aa).

It belongs to the L/F-transferase family.

It localises to the cytoplasm. It catalyses the reaction N-terminal L-lysyl-[protein] + L-leucyl-tRNA(Leu) = N-terminal L-leucyl-L-lysyl-[protein] + tRNA(Leu) + H(+). The enzyme catalyses N-terminal L-arginyl-[protein] + L-leucyl-tRNA(Leu) = N-terminal L-leucyl-L-arginyl-[protein] + tRNA(Leu) + H(+). The catalysed reaction is L-phenylalanyl-tRNA(Phe) + an N-terminal L-alpha-aminoacyl-[protein] = an N-terminal L-phenylalanyl-L-alpha-aminoacyl-[protein] + tRNA(Phe). Functionally, functions in the N-end rule pathway of protein degradation where it conjugates Leu, Phe and, less efficiently, Met from aminoacyl-tRNAs to the N-termini of proteins containing an N-terminal arginine or lysine. This Burkholderia vietnamiensis (strain G4 / LMG 22486) (Burkholderia cepacia (strain R1808)) protein is Leucyl/phenylalanyl-tRNA--protein transferase.